The sequence spans 23 residues: IWGIGCNPCVGDEVTALITRGEA.

Isoleucine 1 carries the (3R,4R)-4,5-dihydroxyisoleucine; in form alpha-amanitin modification. Isoleucine 1 bears the (3R,4S)-4-hydroxyisoleucine; in form gamma-amanitin mark. Positions 1 to 8 (IWGIGCNP) form a cross-link, cyclopeptide (Ile-Pro). A cross-link (2'-cysteinyl-6'-hydroxytryptophan sulfoxide (Trp-Cys)) is located at residues 2–6 (WGIGC). Proline 8 carries the post-translational modification 4-hydroxyproline. The propeptide occupies 9-23 (CVGDEVTALITRGEA).

The protein belongs to the MSDIN fungal toxin family. Post-translationally, processed by the macrocyclase-peptidase enzyme POPB to yield a toxic cyclic decapeptide. POPB first removes 10 residues from the N-terminus. Conformational trapping of the remaining peptide forces the enzyme to release this intermediate rather than proceed to macrocyclization. The enzyme rebinds the remaining peptide in a different conformation and catalyzes macrocyclization of the N-terminal 8 residues.

Its function is as follows. Major toxin belonging to the bicyclic octapeptides amatoxins that acts by binding non-competitively to RNA polymerase II and greatly slowing the elongation of transcripts from target promoters. This Amanita fuligineoides protein is Alpha-amanitin proprotein.